A 312-amino-acid chain; its full sequence is Very-long-chain 3-oxoacyl-CoA reductase (312 aa).

Residues 4 to 24 (ALPAAGFLYWVGAGTVAYLAL) traverse the membrane as a helical segment. An NADP(+)-binding site is contributed by 50 to 79 (GEWAVVTGSTDGIGKSYAEELAKHGMKVVL). 2 consecutive transmembrane segments (helical) span residues 182–202 (GAIL…LTIY) and 271–291 (GYLI…WIYL). Ser-189 is a binding site for substrate. The Proton acceptor role is filled by Tyr-202. Residues 308 to 312 (KTKKN) carry the Di-lysine motif motif.

It belongs to the short-chain dehydrogenases/reductases (SDR) family. 17-beta-HSD 3 subfamily. As to quaternary structure, interacts with ELOVL1 and LASS2. Expressed in most tissues tested. Highly expressed in the ovary and mammary. Expressed in platelets.

The protein localises to the endoplasmic reticulum membrane. It carries out the reaction a very-long-chain (3R)-3-hydroxyacyl-CoA + NADP(+) = a very-long-chain 3-oxoacyl-CoA + NADPH + H(+). It catalyses the reaction 17beta-estradiol + NAD(+) = estrone + NADH + H(+). The catalysed reaction is 17beta-estradiol + NADP(+) = estrone + NADPH + H(+). The enzyme catalyses 3-oxooctadecanoyl-CoA + NADPH + H(+) = (3R)-hydroxyoctadecanoyl-CoA + NADP(+). It carries out the reaction (7Z,10Z,13Z,16Z)-3-oxodocosatetraenoyl-CoA + NADPH + H(+) = (3R)-hydroxy-(7Z,10Z,13Z,16Z)-docosatetraenoyl-CoA + NADP(+). It catalyses the reaction 3-oxo-(7Z,10Z,13Z,16Z,19Z)-docosapentaenoyl-CoA + NADPH + H(+) = (3R)-hydroxy-(7Z,10Z,13Z,16Z,19Z)-docosapentaenoyl-CoA + NADP(+). The catalysed reaction is (8Z,11Z,14Z)-3-oxoeicosatrienoyl-CoA + NADPH + H(+) = (3R)-hydroxy-(8Z,11Z,14Z)-eicosatrienoyl-CoA + NADP(+). Its pathway is lipid metabolism; fatty acid biosynthesis. The protein operates within steroid biosynthesis; estrogen biosynthesis. Catalyzes the second of the four reactions of the long-chain fatty acids elongation cycle. This endoplasmic reticulum-bound enzymatic process, allows the addition of two carbons to the chain of long- and very long-chain fatty acids/VLCFAs per cycle. This enzyme has a 3-ketoacyl-CoA reductase activity, reducing 3-ketoacyl-CoA to 3-hydroxyacyl-CoA, within each cycle of fatty acid elongation. Thereby, it may participate in the production of VLCFAs of different chain lengths that are involved in multiple biological processes as precursors of membrane lipids and lipid mediators. May also catalyze the transformation of estrone (E1) into estradiol (E2) and play a role in estrogen formation. The polypeptide is Very-long-chain 3-oxoacyl-CoA reductase (Homo sapiens (Human)).